A 363-amino-acid polypeptide reads, in one-letter code: Peptide chain release factor 1 (363 aa).

Position 237 is an N5-methylglutamine (Gln-237). A compositionally biased stretch (basic and acidic residues) spans 286–295 (EKRRSAEATT). Residues 286-305 (EKRRSAEATTRRNLVGSGDR) are disordered.

The protein belongs to the prokaryotic/mitochondrial release factor family. Methylated by PrmC. Methylation increases the termination efficiency of RF1.

The protein resides in the cytoplasm. Peptide chain release factor 1 directs the termination of translation in response to the peptide chain termination codons UAG and UAA. This is Peptide chain release factor 1 from Shewanella amazonensis (strain ATCC BAA-1098 / SB2B).